The primary structure comprises 259 residues: Adenylate kinase (259 aa).

52-57 (GAGKGT) serves as a coordination point for ATP. The segment at 72 to 101 (ATGDMLRSQVAKKTDLGREAKKIMDQGGLV) is NMP. AMP contacts are provided by residues threonine 73, arginine 78, 99–101 (GLV), 128–131 (GFPR), and glutamine 135. The tract at residues 169 to 206 (GRLVHPASGRSYHKIFNPPKEAMKDDITGEPLVQRSDD) is LID. ATP-binding positions include arginine 170 and 179-180 (SY). AMP-binding residues include arginine 203 and arginine 214. Glutamine 242 is an ATP binding site.

The protein belongs to the adenylate kinase family. AK2 subfamily. As to quaternary structure, monomer.

It is found in the cytoplasm. The protein localises to the mitochondrion intermembrane space. It catalyses the reaction AMP + ATP = 2 ADP. Catalyzes the reversible transfer of the terminal phosphate group between ATP and AMP. Plays an important role in cellular energy homeostasis and in adenine nucleotide metabolism. Adenylate kinase activity is critical for regulation of the phosphate utilization and the AMP de novo biosynthesis pathways. The sequence is that of Adenylate kinase (adk1) from Emericella nidulans (strain FGSC A4 / ATCC 38163 / CBS 112.46 / NRRL 194 / M139) (Aspergillus nidulans).